The following is a 409-amino-acid chain: Glycosaminoglycan xylosylkinase (409 aa).

Residues 1–6 (MKLKQR) lie on the Cytoplasmic side of the membrane. Residues 7–25 (VVLLAILLVIFIFTKVFLI) traverse the membrane as a helical; Signal-anchor for type II membrane protein segment. Residues 26-409 (DNLDTSAANR…VEDRMPLSHL (384 aa)) are Lumenal-facing. Residues glutamine 107 and lysine 123 each coordinate ATP. Residue aspartate 142 coordinates Mn(2+). Residue asparagine 193 is glycosylated (N-linked (GlcNAc...) asparagine). 2 disulfide bridges follow: cysteine 196–cysteine 211 and cysteine 201–cysteine 204. An ATP-binding site is contributed by 222 to 225 (TLWL). 2 disulfides stabilise this stretch: cysteine 257-cysteine 331 and cysteine 332-cysteine 389. Residue aspartate 289 is part of the active site. 2 residues coordinate ATP: glutamate 294 and aspartate 309. Mn(2+) is bound at residue aspartate 309.

This sequence belongs to the FAM20 family. Requires Mn(2+) as cofactor. Widely expressed. Strongly expressed in pancreas, spleen and fetal liver.

The protein resides in the golgi apparatus membrane. The catalysed reaction is 3-O-(beta-D-galactosyl-(1-&gt;3)-beta-D-galactosyl-(1-&gt;4)-beta-D-xylosyl)-L-seryl-[protein] + ATP = 3-O-(beta-D-galactosyl-(1-&gt;3)-beta-D-galactosyl-(1-&gt;4)-beta-D-2-O-phosphoxylosyl)-L-seryl-[protein] + ADP + H(+). Responsible for the 2-O-phosphorylation of xylose in the glycosaminoglycan-protein linkage region of proteoglycans thereby regulating the amount of mature GAG chains. Sulfated glycosaminoglycans (GAGs), including heparan sulfate and chondroitin sulfate, are synthesized on the so-called common GAG-protein linkage region (GlcUAbeta1-3Galbeta1-3Galbeta1-4Xylbeta1-O-Ser) of core proteins, which is formed by the stepwise addition of monosaccharide residues by the respective specific glycosyltransferases. Xylose 2-O-phosphorylation may influence the catalytic activity of B3GAT3 (GlcAT-I) which completes the precursor tetrasaccharide of GAG-protein linkage regions on which the repeating disaccharide region is synthesized. This is Glycosaminoglycan xylosylkinase from Homo sapiens (Human).